Consider the following 381-residue polypeptide: Translation initiation factor eIF2B subunit beta (381 aa).

The segment at 125–148 (LQKPEQPHQNRKNSSGSSSMKTKT) is disordered. The span at 136 to 145 (KNSSGSSSMK) shows a compositional bias: polar residues.

It belongs to the eIF-2B alpha/beta/delta subunits family. In terms of assembly, component of the translation initiation factor 2B (eIF2B) complex which is a heterodecamer of two sets of five different subunits: alpha, beta, gamma, delta and epsilon. Subunits alpha, beta and delta comprise a regulatory subcomplex and subunits epsilon and gamma comprise a catalytic subcomplex. Within the complex, the hexameric regulatory complex resides at the center, with the two heterodimeric catalytic subcomplexes bound on opposite sides.

Its subcellular location is the cytoplasm. It localises to the cytosol. In terms of biological role, acts as a component of the translation initiation factor 2B (eIF2B) complex, which catalyzes the exchange of GDP for GTP on the eukaryotic initiation factor 2 (eIF2) complex gamma subunit. Its guanine nucleotide exchange factor activity is repressed when bound to eIF2 complex phosphorylated on the alpha subunit, thereby limiting the amount of methionyl-initiator methionine tRNA available to the ribosome and consequently global translation is repressed. It activates the synthesis of GCN4 in yeast under amino acid starvation conditions by suppressing the inhibitory effects of multiple AUG codons present in the leader of GCN4 mRNA. It may promote either repression or activation of GCN4 expression depending on amino acid availability. GCD6 and GCD7 repress GCN4 expression at the translational level by ensuring that ribosomes which have translated UORF1 will reinitiate at UORF2, -3, or -4 and thus fail to reach the GCN4 start site. This chain is Translation initiation factor eIF2B subunit beta (GCD7), found in Saccharomyces cerevisiae (strain ATCC 204508 / S288c) (Baker's yeast).